A 162-amino-acid chain; its full sequence is MNKIAIYPGTFDPITNGHVDLVERALNIFDEIVVAVSTAYGKNTLFDIRIREQMIKEVFKDNQRVKVVSFQGLLVDTAVKHNACAIVRGLRAVSDFDYEFQMSSVNNKLNSDIQTIFLTPSEKFSCISSTLVRAVAIHNYKRVDEFVPECVFREIKLKYSKE.

Thr-10 is a binding site for substrate. ATP contacts are provided by residues 10-11 and His-18; that span reads TF. Substrate is bound by residues Lys-42, Leu-74, and Arg-88. ATP-binding positions include 89-91, Glu-99, and 124-130; these read GLR and FSCISST.

It belongs to the bacterial CoaD family. As to quaternary structure, homohexamer. The cofactor is Mg(2+).

The protein resides in the cytoplasm. The catalysed reaction is (R)-4'-phosphopantetheine + ATP + H(+) = 3'-dephospho-CoA + diphosphate. The protein operates within cofactor biosynthesis; coenzyme A biosynthesis; CoA from (R)-pantothenate: step 4/5. In terms of biological role, reversibly transfers an adenylyl group from ATP to 4'-phosphopantetheine, yielding dephospho-CoA (dPCoA) and pyrophosphate. This Francisella tularensis subsp. mediasiatica (strain FSC147) protein is Phosphopantetheine adenylyltransferase.